Consider the following 148-residue polypeptide: 3-dehydroquinate dehydratase (148 aa).

Tyr-23 serves as the catalytic Proton acceptor. Residues Asn-75, His-81, and Asp-88 each coordinate substrate. His-101 serves as the catalytic Proton donor. Substrate is bound by residues 102-103 and Arg-112; that span reads LS.

Belongs to the type-II 3-dehydroquinase family. Homododecamer.

It catalyses the reaction 3-dehydroquinate = 3-dehydroshikimate + H2O. Its pathway is metabolic intermediate biosynthesis; chorismate biosynthesis; chorismate from D-erythrose 4-phosphate and phosphoenolpyruvate: step 3/7. Functionally, catalyzes a trans-dehydration via an enolate intermediate. This Cellvibrio japonicus (strain Ueda107) (Pseudomonas fluorescens subsp. cellulosa) protein is 3-dehydroquinate dehydratase.